The chain runs to 447 residues: C4-dicarboxylate transport protein 3 (447 aa).

Helical transmembrane passes span 5 to 27, 42 to 64, 77 to 99, 146 to 165, 186 to 208, 223 to 245, 315 to 337, and 352 to 374; these read TLGK…GVAA, IKLI…IARM, ALVY…VNLV, LARN…GIAL, VFSI…MAFT, LMAT…VARL, IFVA…LGVL, and FITL…VLLL.

The protein belongs to the dicarboxylate/amino acid:cation symporter (DAACS) (TC 2.A.23) family.

Its subcellular location is the cell inner membrane. Responsible for the transport of dicarboxylates such as succinate, fumarate, and malate from the periplasm across the membrane. The protein is C4-dicarboxylate transport protein 3 (dctA3) of Ralstonia nicotianae (strain ATCC BAA-1114 / GMI1000) (Ralstonia solanacearum).